Here is a 142-residue protein sequence, read N- to C-terminus: Large ribosomal subunit protein uL13 (142 aa).

The protein belongs to the universal ribosomal protein uL13 family. In terms of assembly, part of the 50S ribosomal subunit.

In terms of biological role, this protein is one of the early assembly proteins of the 50S ribosomal subunit, although it is not seen to bind rRNA by itself. It is important during the early stages of 50S assembly. This Aliivibrio salmonicida (strain LFI1238) (Vibrio salmonicida (strain LFI1238)) protein is Large ribosomal subunit protein uL13.